The sequence spans 1190 residues: Laminin subunit gamma-2 (1190 aa).

The first 21 residues, Met-1–Ala-21, serve as a signal peptide directing secretion. 12 cysteine pairs are disulfide-bonded: Cys-28/Cys-37, Cys-30/Cys-53, Cys-56/Cys-65, Cys-68/Cys-81, Cys-84/Cys-96, Cys-86/Cys-102, Cys-104/Cys-113, Cys-116/Cys-128, Cys-139/Cys-150, Cys-141/Cys-155, Cys-157/Cys-166, and Cys-169/Cys-184. 3 Laminin EGF-like domains span residues Cys-28–Pro-83, Cys-84–Gln-130, and Cys-139–Gln-186. One can recognise a Laminin EGF-like 4; first part domain in the interval Cys-187–Cys-196. Residues Gln-213–Gln-381 form the Laminin IV type A domain. Residues Asn-342 and Asn-362 are each glycosylated (N-linked (GlcNAc...) asparagine). Residues Cys-382 to Pro-415 form the Laminin EGF-like 4; second part domain. 3 consecutive Laminin EGF-like domains span residues Cys-416–Pro-462, Cys-463–Pro-517, and Cys-518–Ala-573. Disulfide bonds link Cys-463–Cys-471, Cys-465–Cys-482, Cys-485–Cys-494, Cys-497–Cys-515, Cys-518–Cys-532, Cys-520–Cys-539, Cys-542–Cys-551, Cys-554–Cys-571, Cys-574–Cys-586, Cys-576–Cys-592, and Cys-594–Cys-603. Residues Cys-574–Cys-603 enclose the Laminin EGF-like 8; truncated domain. Residues Glu-604–Gln-1190 form a domain II and I region. Residues Ala-613–Asp-718 adopt a coiled-coil conformation. Residue Ser-803 is glycosylated (O-linked (Xyl...) (chondroitin sulfate) serine). Coiled-coil stretches lie at residues Ala-809–Met-1073 and Glu-1114–Gln-1190. Residues Asn-939 and Asn-1030 are each glycosylated (N-linked (GlcNAc...) asparagine).

In terms of assembly, laminin is a complex glycoprotein, consisting of three different polypeptide chains (alpha, beta, gamma), which are bound to each other by disulfide bonds into a cross-shaped molecule comprising one long and three short arms with globules at each end. Gamma-2 is a subunit of laminin-5 (laminin-332 or epiligrin/kalinin/nicein). Post-translationally, O-glycosylated; contains chondroitin sulfate (CS).

Its subcellular location is the secreted. The protein localises to the extracellular space. It localises to the extracellular matrix. The protein resides in the basement membrane. In terms of biological role, binding to cells via a high affinity receptor, laminin is thought to mediate the attachment, migration and organization of cells into tissues during embryonic development by interacting with other extracellular matrix components. Ladsin exerts cell-scattering activity toward a wide variety of cells, including epithelial, endothelial, and fibroblastic cells. The polypeptide is Laminin subunit gamma-2 (LAMC2) (Equus caballus (Horse)).